The sequence spans 381 residues: Succinyl-diaminopimelate desuccinylase (381 aa).

Zn(2+) is bound at residue H72. Residue D74 is part of the active site. D105 is a Zn(2+) binding site. The active-site Proton acceptor is the E139. Zn(2+) contacts are provided by E140, E168, and H354.

It belongs to the peptidase M20A family. DapE subfamily. As to quaternary structure, homodimer. The cofactor is Zn(2+). Requires Co(2+) as cofactor.

It catalyses the reaction N-succinyl-(2S,6S)-2,6-diaminopimelate + H2O = (2S,6S)-2,6-diaminopimelate + succinate. Its pathway is amino-acid biosynthesis; L-lysine biosynthesis via DAP pathway; LL-2,6-diaminopimelate from (S)-tetrahydrodipicolinate (succinylase route): step 3/3. In terms of biological role, catalyzes the hydrolysis of N-succinyl-L,L-diaminopimelic acid (SDAP), forming succinate and LL-2,6-diaminopimelate (DAP), an intermediate involved in the bacterial biosynthesis of lysine and meso-diaminopimelic acid, an essential component of bacterial cell walls. The polypeptide is Succinyl-diaminopimelate desuccinylase (Shewanella sp. (strain MR-4)).